The primary structure comprises 513 residues: MSEKLDLTRFEKKMVIRNIEEKDIDKIIDLQKDCFPGMEPWKREHLISHLEHFPEGQFCAEFEGEIIGSCSSLLINFDEYDDRHTWQDITDDGYITNHNPDGLNMYGIEVMVHPKYRRMKIGHRLYEARKDLARRLNLKSIIIGGRIPNYHKYAEEMTAREYVEQVTRHQIYDPVLSFQLMNGFTLMRINPNYLPDDTASIKYATLMEWNNVDYLPQQTKRYYKSAFPVRICVIQYEMKKIYSFEEFANQVEYYVDVASDARSDFAVFPEIFTTQLMSFLEERSPSLAVQRITEYTEDYISLFTDLAVKYNVNIIGGSHFVEEEGKIYNIAYLFRRDGTIEKQYKLHITPNERKWWGISAGDQVRVFDTDCGKIAIQICYDIEFPELARIAADKGAKIIFTPFCTEDRQGYLRVRYCSQARAVENQIYTVISGTVGNLPQTENMDIQYAQSGIFAPSDFEFARDGIVGETNPNIEMVVIGDVDLEILRRQRQNGTVRQLKDRRRDIYHIQYKK.

The 199-residue stretch at Met-14–Val-212 folds into the N-acetyltransferase domain. In terms of domain architecture, CN hydrolase spans Val-229–Leu-484. Catalysis depends on Glu-270, which acts as the Proton acceptor. Residue Lys-345 is the Proton donor of the active site. The active-site Nucleophile is Cys-379.

It belongs to the carbon-nitrogen hydrolase superfamily. NIT1/NIT2 family.

This Bacillus subtilis (strain 168) protein is Probable hydrolase YhcX (yhcX).